Reading from the N-terminus, the 723-residue chain is MRYQQDTLFPYALKNVEEYLKANWNEDATKTVVAALREQADEDKKAEVEGALTIPAGDSEDIIPDIVKYVEWQTSRDAKTGSLKTLQGLVWAKGYKDGSIKGHVYDDVSKALEQWTEGGRKIYVYSSGSVDAQKMLFEHSEQGDLVKYLAGHYDTKIGAKTEKDSYEAILKNIEATAEEALFLTDVVAEAKAAKEAGLNVVVLERPGNAELSEDDRKEFTVVKSFADIPLESIVESANGAGAKRKIDEAQEEDEAQPPTKVVKKDENGDAAAKKDETAKVDEPAAKATNGDAAAKEEAAAPAEGKMEVDEAAAAAAPPADAAEEKKETEEAKPETEKVTEKTESTAAEKKEEDKKEEVAESKEAAPKEVVAEEAKKEEEVKAAAPAEEVKKVEEPVPAEAKKVVEEEKMEVDGGAEAVAEEKEAEKKEEDKAAEPAAEKKPAEEAVVTSTEEPAKEEPKVESSTAEAEPAKEKPAEAEAKAAPAETTKAEVVEKPAETPAAESMETDSEPSADKEAEAKPEAKPVEEVKKAEAEKKVEAEKKPAESEAEAKEVATKPVEETKGEETTTAGPVEEIAVEAKEDAAKPEEKKSDADEVSTTTTTTSTESKTENGTHENGVSKEATPVNGKEESRVPENGEAEPAAEAVVTSNGNGKHEEKGDSDKENDTATSNTTEEPAANGNGVENGSTTSSTTTPAPDAAAEIKSKKVIDSSTTPTPPIEAES.

Substrate is bound by residues 126–127 and lysine 160; that span reads SS. Residues 239–723 are disordered; that stretch reads GAGAKRKIDE…TPTPPIEAES (485 aa). Composition is skewed to basic and acidic residues over residues 262-284 and 293-308; these read VKKD…DEPA and AAKE…KMEV. The segment covering 311 to 320 has biased composition (low complexity); it reads AAAAAAPPAD. Basic and acidic residues-rich tracts occupy residues 322–406, 419–443, 468–479, 487–496, 511–565, and 577–593; these read AEEK…VVEE, AEEK…KPAE, EPAKEKPAEAEA, TKAEVVEKPA, SADK…KGEE, and VEAK…KSDA. 2 stretches are compositionally biased toward low complexity: residues 596–606 and 636–647; these read VSTTTTTTSTE and NGEAEPAAEAVV. A compositionally biased stretch (basic and acidic residues) spans 653-666; that stretch reads GKHEEKGDSDKEND.

Belongs to the HAD-like hydrolase superfamily. MasA/MtnC family. As to quaternary structure, monomer.

It is found in the cytoplasm. It localises to the nucleus. The catalysed reaction is 5-methylsulfanyl-2,3-dioxopentyl phosphate + H2O = 1,2-dihydroxy-5-(methylsulfanyl)pent-1-en-3-one + phosphate. It participates in amino-acid biosynthesis; L-methionine biosynthesis via salvage pathway; L-methionine from S-methyl-5-thio-alpha-D-ribose 1-phosphate: step 3/6. The protein operates within amino-acid biosynthesis; L-methionine biosynthesis via salvage pathway; L-methionine from S-methyl-5-thio-alpha-D-ribose 1-phosphate: step 4/6. Its function is as follows. Bifunctional enzyme that catalyzes the enolization of 2,3-diketo-5-methylthiopentyl-1-phosphate (DK-MTP-1-P) into the intermediate 2-hydroxy-3-keto-5-methylthiopentenyl-1-phosphate (HK-MTPenyl-1-P), which is then dephosphorylated to form the acireductone 1,2-dihydroxy-3-keto-5-methylthiopentene (DHK-MTPene). This is Enolase-phosphatase E1 from Culex quinquefasciatus (Southern house mosquito).